Here is a 948-residue protein sequence, read N- to C-terminus: UvrABC system protein A (948 aa).

Gly31 to Ser38 is an ATP binding site. The C4-type zinc-finger motif lies at Cys249–Cys277. 2 ABC transporter domains span residues Trp307 to Leu586 and Gly606 to Lys934. Gly638–Ser645 lines the ATP pocket. Residues Cys737–Cys763 form a C4-type zinc finger.

The protein belongs to the ABC transporter superfamily. UvrA family. In terms of assembly, forms a heterotetramer with UvrB during the search for lesions.

It localises to the cytoplasm. In terms of biological role, the UvrABC repair system catalyzes the recognition and processing of DNA lesions. UvrA is an ATPase and a DNA-binding protein. A damage recognition complex composed of 2 UvrA and 2 UvrB subunits scans DNA for abnormalities. When the presence of a lesion has been verified by UvrB, the UvrA molecules dissociate. In Leptospira interrogans serogroup Icterohaemorrhagiae serovar copenhageni (strain Fiocruz L1-130), this protein is UvrABC system protein A.